We begin with the raw amino-acid sequence, 342 residues long: tRNA dimethylallyltransferase (342 aa).

39–46 (GPTGSGKT) lines the ATP pocket. 41–46 (TGSGKT) provides a ligand contact to substrate. Residues 64-67 (DSMQ) are interaction with substrate tRNA.

This sequence belongs to the IPP transferase family. As to quaternary structure, monomer. It depends on Mg(2+) as a cofactor.

The catalysed reaction is adenosine(37) in tRNA + dimethylallyl diphosphate = N(6)-dimethylallyladenosine(37) in tRNA + diphosphate. Its function is as follows. Catalyzes the transfer of a dimethylallyl group onto the adenine at position 37 in tRNAs that read codons beginning with uridine, leading to the formation of N6-(dimethylallyl)adenosine (i(6)A). In Chlamydia pneumoniae (Chlamydophila pneumoniae), this protein is tRNA dimethylallyltransferase.